The chain runs to 432 residues: UPF0597 protein APJL_1638 (432 aa).

The protein belongs to the UPF0597 family.

The protein is UPF0597 protein APJL_1638 of Actinobacillus pleuropneumoniae serotype 3 (strain JL03).